The following is a 67-amino-acid chain: DLITNSYTRGKPRHVTSWRNLRTDVCKKSPGKCIHNGCFCEQDKPQGNCCDSGGCTVKWWCPGTKGD.

The propeptide occupies 1–21; that stretch reads DLITNSYTRGKPRHVTSWRNL.

In terms of processing, contains 4 disulfide bonds. Expressed by the venom duct.

The protein localises to the secreted. The chain is Conotoxin Cal12.1p2 from Californiconus californicus (California cone).